Consider the following 96-residue polypeptide: Cysteine protease immunity 1 (96 aa).

This chain is Cysteine protease immunity 1, found in Escherichia coli O1:K1:H7 (strain ATCC 11775 / DSM 30083 / JCM 1649 / NBRC 102203 / NCTC 9001 / U5/41).